The primary structure comprises 257 residues: MEEQSVNMARLKGEVLPALFASPATIGEYGAGIDGADSLNELSNLMEHGAVAALADKISQIVAKLADADPRKIAEKPTWFEKMLGREVERQVRYQVARKTLDQLLDEAEGVAQRVRDTLRALDDMLNTHEAEVDRLRAYIQAGREFLDENPEAGAAKAGVIEFDKPRERFARKLANLATLMASHEMSVTQMKLTRAQAVDMLDRFSETASVLVPVWRQHTLALITTKNMNPAMVAEAAKAHQALMRSLSQSLEGINQ.

Belongs to the kla operon, which is associated with cryptic tellurite resistance, and IncW plasmid fertility inhibition. This Escherichia coli protein is Protein KlaA (klaA).